A 362-amino-acid chain; its full sequence is 3-dehydroquinate synthase (362 aa).

NAD(+)-binding positions include 71–76, 105–109, 129–130, Lys142, Lys151, and 169–172; these read DGEQYK, GVVGD, TT, and CLKT. Zn(2+)-binding residues include Glu184, His247, and His264.

This sequence belongs to the sugar phosphate cyclases superfamily. Dehydroquinate synthase family. Requires Co(2+) as cofactor. Zn(2+) serves as cofactor. It depends on NAD(+) as a cofactor.

It is found in the cytoplasm. It carries out the reaction 7-phospho-2-dehydro-3-deoxy-D-arabino-heptonate = 3-dehydroquinate + phosphate. It functions in the pathway metabolic intermediate biosynthesis; chorismate biosynthesis; chorismate from D-erythrose 4-phosphate and phosphoenolpyruvate: step 2/7. Catalyzes the conversion of 3-deoxy-D-arabino-heptulosonate 7-phosphate (DAHP) to dehydroquinate (DHQ). In Escherichia coli O81 (strain ED1a), this protein is 3-dehydroquinate synthase.